We begin with the raw amino-acid sequence, 152 residues long: CASP-like protein 5B3 (152 aa).

Residues 1–21 (MIDIPGTPGTLTGLVLRISQC) are Cytoplasmic-facing. The next 2 membrane-spanning stretches (helical) occupy residues 22 to 42 (VFAAGSISYMVTSGGFFSFTA) and 43 to 63 (FCYLIAAMGLQVIWSFGLAIL). At 64-77 (DTFALVRKKTLLSP) the chain is on the extracellular side. The helical transmembrane segment at 78-98 (VLVSLFVVGDWVTSTLSLAGA) threads the bilayer. Topologically, residues 99–127 (SSSAGITVLYFGDLGSCSFEAECWKYQLS) are cytoplasmic. The helical transmembrane segment at 128–148 (VALAFLCWITIAVSSLTTLWL) threads the bilayer. At 149-152 (LASA) the chain is on the extracellular side.

It belongs to the Casparian strip membrane proteins (CASP) family. Homodimer and heterodimers. In terms of tissue distribution, expressed in the stele of the root and in leaves.

It is found in the cell membrane. The chain is CASP-like protein 5B3 from Arabidopsis thaliana (Mouse-ear cress).